We begin with the raw amino-acid sequence, 245 residues long: Pyridoxine 5'-phosphate synthase (245 aa).

Asn-7 lines the 3-amino-2-oxopropyl phosphate pocket. 9 to 10 (DH) contacts 1-deoxy-D-xylulose 5-phosphate. Residue Arg-18 participates in 3-amino-2-oxopropyl phosphate binding. Residue His-43 is the Proton acceptor of the active site. Arg-45 and His-50 together coordinate 1-deoxy-D-xylulose 5-phosphate. Residue Glu-70 is the Proton acceptor of the active site. Thr-100 lines the 1-deoxy-D-xylulose 5-phosphate pocket. His-190 functions as the Proton donor in the catalytic mechanism. Residues Gly-191 and 212–213 (GH) contribute to the 3-amino-2-oxopropyl phosphate site.

This sequence belongs to the PNP synthase family. In terms of assembly, homooctamer; tetramer of dimers.

The protein localises to the cytoplasm. The catalysed reaction is 3-amino-2-oxopropyl phosphate + 1-deoxy-D-xylulose 5-phosphate = pyridoxine 5'-phosphate + phosphate + 2 H2O + H(+). It participates in cofactor biosynthesis; pyridoxine 5'-phosphate biosynthesis; pyridoxine 5'-phosphate from D-erythrose 4-phosphate: step 5/5. Its function is as follows. Catalyzes the complicated ring closure reaction between the two acyclic compounds 1-deoxy-D-xylulose-5-phosphate (DXP) and 3-amino-2-oxopropyl phosphate (1-amino-acetone-3-phosphate or AAP) to form pyridoxine 5'-phosphate (PNP) and inorganic phosphate. In Prochlorococcus marinus (strain NATL1A), this protein is Pyridoxine 5'-phosphate synthase.